Here is a 2006-residue protein sequence, read N- to C-terminus: Supporter of activation of yellow protein (2006 aa).

Disordered regions lie at residues 1 to 208, 313 to 347, 458 to 564, 744 to 794, 821 to 916, 929 to 1029, 1044 to 1082, and 1099 to 1196; these read MNDL…RRVE, MPAK…SSLA, EEKP…AQSQ, DTQD…DPAR, DLEG…KSRR, VSVG…NNNS, CSSS…SDPL, and QQLR…SAVA. Over residues 10–60 the composition is skewed to low complexity; the sequence is VAATSSSGSESGTAVESAAATSTAGSAGAAGRPQSNCSANSNAKSVAASST. Residues 67-81 show a composition bias toward polar residues; the sequence is VSSTSSPAQRDQQLN. Positions 118–128 are enriched in pro residues; it reads SPPPTLPPPTT. Positions 129–168 are enriched in low complexity; the sequence is PCDDAPSTTGASASASSASGEAPSAASAAGAAGGPMAATA. Over residues 189 to 199 the composition is skewed to polar residues; that stretch reads ANPNSNANESQ. The span at 321 to 347 shows a compositional bias: low complexity; sequence LSSLSPASASSSSASSSSSSSSSSSLA. The span at 485-494 shows a compositional bias: polar residues; it reads GGESNSSSQE. Over residues 525-534 the composition is skewed to basic and acidic residues; it reads SLSKEHDPKI. Residues 543 to 563 show a composition bias toward low complexity; the sequence is ASNGIASGGSKASKASKSAQS. Basic and acidic residues predominate over residues 744 to 758; the sequence is DTQDNNNENHLKRTN. Composition is skewed to polar residues over residues 759–769 and 828–844; these read SEGNESPSSRL and PPTQ…NGAL. Positions 861–870 are enriched in pro residues; sequence PATPQPPPVA. Basic and acidic residues-rich tracts occupy residues 936-945 and 963-972; these read ADMKAKEKES and ESPKTRDHRP. Low complexity-rich tracts occupy residues 978-990 and 1018-1029; these read RTTT…LQPT and SSESESNNNNNS. The span at 1053 to 1080 shows a compositional bias: polar residues; sequence GAAANQQVIGGSGSSSMLPPTTILSSSD. A compositionally biased stretch (low complexity) spans 1103–1112; the sequence is SSRPSSISCG. Basic residues predominate over residues 1147 to 1158; the sequence is GRGRGRRSRGGR. The segment covering 1161 to 1173 has biased composition (low complexity); that stretch reads GSSSVDRAVSVGG. The segment at 1340 to 1573 is SAY; sequence MIQEQVALYL…PPTDLMAQLL (234 aa). Residues 1579 to 1685 form a disordered region; sequence AVGSDEIKTS…AGSEDEDGNE (107 aa). Composition is skewed to low complexity over residues 1627–1652 and 1660–1677; these read TASS…SSDT and FSST…SGAG. A PHD-type 1; degenerate zinc finger spans residues 1694-1751; that stretch reads TCGVCLRSQHRNARDMPEAFIRCYTCRKRVHPSCVDMPPRMVGRVRNYNWQCAGCKCC. The PHD-type 2; degenerate zinc finger occupies 1753-1796; that stretch reads KCRSSQRPGKMLYCEQCDRGYHIYCLGLRTVPDGRWSCERCCFC. Residues 1887–1911 are disordered; that stretch reads TSAQTDDSPMPSPGLTTNGGRALSP.

This sequence belongs to the SAYP family. Widely expressed. Highly expressed in ovary. Expressed in nursing cells and growing oocytes at all stages of development and accumulates in mature oocytes. Expressed in the nuclei of syncytium blastoderm of early embryos and in the nuclei of different tissues of late embryos, larvae, and adults.

The protein resides in the nucleus. Its subcellular location is the cytoplasm. It localises to the chromosome. Its function is as follows. Essential transcription regulator during early development. Coactivates transcription of some euchromatin genes and repress transcription in of euchromatin genes translocated to heterochromatin. The protein is Supporter of activation of yellow protein (e(y)3) of Drosophila melanogaster (Fruit fly).